The sequence spans 619 residues: 1-deoxy-D-xylulose-5-phosphate synthase (619 aa).

Residues histidine 80 and 121–123 (GHS) contribute to the thiamine diphosphate site. Aspartate 152 serves as a coordination point for Mg(2+). Residues 153–154 (GA), asparagine 181, tyrosine 288, and glutamate 370 contribute to the thiamine diphosphate site. Asparagine 181 contacts Mg(2+).

The protein belongs to the transketolase family. DXPS subfamily. Homodimer. Requires Mg(2+) as cofactor. Thiamine diphosphate is required as a cofactor.

The catalysed reaction is D-glyceraldehyde 3-phosphate + pyruvate + H(+) = 1-deoxy-D-xylulose 5-phosphate + CO2. It functions in the pathway metabolic intermediate biosynthesis; 1-deoxy-D-xylulose 5-phosphate biosynthesis; 1-deoxy-D-xylulose 5-phosphate from D-glyceraldehyde 3-phosphate and pyruvate: step 1/1. Catalyzes the acyloin condensation reaction between C atoms 2 and 3 of pyruvate and glyceraldehyde 3-phosphate to yield 1-deoxy-D-xylulose-5-phosphate (DXP). The chain is 1-deoxy-D-xylulose-5-phosphate synthase from Yersinia pseudotuberculosis serotype O:3 (strain YPIII).